The primary structure comprises 440 residues: MSNQGAFDGAANVESGSRVFVYEVVGMRQNEETDQTNYPIRKSGSVFIRVPYNRMNQEMQRITRLGGKIVTIQTVSALQQLNGRTTIATVTDASSEIAKSEGNGKATPVKTDSGAKAFAKPPAEEQLKKKDNKGNTMTQAKAKHADVPVNLYRPNAPFIGKVISNEPLVKEGGIGIVQHIKFDLTGGNLKYIEGQSIGIIPPGVDKNGKPEKLRLYSIASTRHGDDVDDKTISLCVRQLEYKHPESGETVYGVCSTYLTHIEPGSEVKITGPVGKEMLLPDDPEANVIMLATGTGIAPMRTYLWRMFKDAERAANPEYQFKGFSWLVFGVPTTPNILYKEELEEIQQKYPDNFRLTYAISREQKNPQGGRMYIQDRVAEHADELWQLIKNQKTHTYICGLRGMEEGIDAALSAAAAKEGVTWSDYQKDLKKAGRWHVETY.

One can recognise a CpcD-like domain in the interval 17–75 (SRVFVYEVVGMRQNEETDQTNYPIRKSGSVFIRVPYNRMNQEMQRITRLGGKIVTIQTV). The tract at residues 99–142 (KSEGNGKATPVKTDSGAKAFAKPPAEEQLKKKDNKGNTMTQAKA) is disordered. Residues 122–133 (PAEEQLKKKDNK) show a composition bias toward basic and acidic residues. One can recognise an FAD-binding FR-type domain in the interval 155-279 (NAPFIGKVIS…TGPVGKEMLL (125 aa)). Residues 214–217 (RLYS), 235–237 (CVR), Tyr-241, 253–255 (VCS), and Thr-294 each bind FAD. The NADP(+) site is built by Ser-217 and Arg-237. NADP(+) is bound by residues Thr-294, 330-331 (VP), 360-361 (SR), 370-374 (RMYIQ), 399-400 (GL), and Glu-438.

This sequence belongs to the ferredoxin--NADP reductase type 1 family. FAD is required as a cofactor.

It is found in the cellular thylakoid membrane. It carries out the reaction 2 reduced [2Fe-2S]-[ferredoxin] + NADP(+) + H(+) = 2 oxidized [2Fe-2S]-[ferredoxin] + NADPH. The sequence is that of Ferredoxin--NADP reductase (petH) from Nostoc sp. (strain ATCC 29151 / PCC 7119) (Anabaena sp.).